The primary structure comprises 146 residues: Small ribosomal subunit protein uS5 (146 aa).

One can recognise an S5 DRBM domain in the interval 8 to 71 (FEEVIVNIGR…DDAFKNIIDV (64 aa)).

The protein belongs to the universal ribosomal protein uS5 family. As to quaternary structure, part of the 30S ribosomal subunit. Contacts proteins S4 and S8.

Functionally, with S4 and S12 plays an important role in translational accuracy. Located at the back of the 30S subunit body where it stabilizes the conformation of the head with respect to the body. The polypeptide is Small ribosomal subunit protein uS5 (Campylobacter hominis (strain ATCC BAA-381 / DSM 21671 / CCUG 45161 / LMG 19568 / NCTC 13146 / CH001A)).